Reading from the N-terminus, the 597-residue chain is Arginine--tRNA ligase (597 aa).

A 'HIGH' region motif is present at residues 125-135 (PNTNKPLHLGH).

Belongs to the class-I aminoacyl-tRNA synthetase family. Monomer.

The protein resides in the cytoplasm. It carries out the reaction tRNA(Arg) + L-arginine + ATP = L-arginyl-tRNA(Arg) + AMP + diphosphate. The polypeptide is Arginine--tRNA ligase (Bacteroides thetaiotaomicron (strain ATCC 29148 / DSM 2079 / JCM 5827 / CCUG 10774 / NCTC 10582 / VPI-5482 / E50)).